Reading from the N-terminus, the 326-residue chain is Lipopolysaccharide heptosyltransferase 1 (326 aa).

The ADP site is built by Thr187, Thr188, Lys192, Glu222, and Met242. Residues Thr187, Thr188, Lys192, Glu222, Met242, Asp261, Thr262, Gly263, and His266 each contribute to the ADP-L-glycero-beta-D-manno-heptose site. Residues Thr262 and Gly263 each coordinate ADP.

The protein belongs to the glycosyltransferase 9 family. Monomer.

Its subcellular location is the cell inner membrane. The catalysed reaction is an alpha-Kdo-(2-&gt;4)-alpha-Kdo-(2-&gt;6)-lipid A + ADP-L-glycero-beta-D-manno-heptose = an L-alpha-D-Hep-(1-&gt;5)-[alpha-Kdo-(2-&gt;4)]-alpha-Kdo-(2-&gt;6)-lipid A + ADP + H(+). It catalyses the reaction alpha-Kdo-(2-&gt;4)-alpha-Kdo-(2-&gt;6)-lipid A (E. coli) + ADP-L-glycero-beta-D-manno-heptose = L-alpha-D-Hep-(1-&gt;5)-[alpha-Kdo-(2-&gt;4)]-alpha-Kdo-(2-&gt;6)-lipid A (E. coli) + ADP + H(+). It functions in the pathway bacterial outer membrane biogenesis; LPS core biosynthesis. Its activity is regulated as follows. Inhibited by ADP-L-glycero-beta-D-gluco-2-deoxy-2-fluoro-heptose (ADP-2F-heptose), a non-cleavable analog of the substrate ADP-L-glycero-beta-D-manno-heptose. Functionally, glycosyltransferase involved in the biosynthesis of the core oligosaccharide region of lipopolysaccharide (LPS). Catalyzes the addition of the first heptose unit to one 3-deoxy-D-manno-octulosonic acid (Kdo) residue of the Kdo2-lipid A module. The sequence is that of Lipopolysaccharide heptosyltransferase 1 from Escherichia coli O18:K1:H7 (strain RS218 / NMEC).